The sequence spans 401 residues: Protein KlcB (401 aa).

Residues 253 to 311 (AARSNAKGKAGGRERDPASAETAMRCSTAKADDCKAEAGPVSPEATMPGAGEASCSTAR) form a disordered region.

This is Protein KlcB (klcB) from Escherichia coli.